The following is a 335-amino-acid chain: Putative D-threonate 4-phosphate dehydrogenase (335 aa).

2 residues coordinate substrate: histidine 140 and threonine 141. A divalent metal cation contacts are provided by histidine 170, histidine 214, and histidine 269. The substrate site is built by lysine 277 and arginine 295.

It belongs to the PdxA family. PdxA2 subfamily. Homodimer. It depends on a divalent metal cation as a cofactor.

It carries out the reaction 4-O-phospho-D-threonate + NAD(+) = dihydroxyacetone phosphate + CO2 + NADH. Functionally, catalyzes the NAD-dependent oxidation and subsequent decarboxylation of D-threonate 4-phosphate to produce dihydroxyacetone phosphate (DHAP). The polypeptide is Putative D-threonate 4-phosphate dehydrogenase (Symbiobacterium thermophilum (strain DSM 24528 / JCM 14929 / IAM 14863 / T)).